Consider the following 396-residue polypeptide: Proteasome-activating nucleotidase (396 aa).

Positions 16-57 (ITYLKRRIRQLELQVRMLEADKERLERELSRLRSEMSRLRQP) form a coiled coil. ATP contacts are provided by residues 181–186 (GCGKTL) and histidine 320. Residues 394–396 (IYG) form a docks into pockets in the proteasome alpha-ring to cause gate opening region.

It belongs to the AAA ATPase family. Homohexamer. The hexameric complex has a two-ring architecture resembling a top hat that caps the 20S proteasome core at one or both ends. Upon ATP-binding, the C-terminus of PAN interacts with the alpha-rings of the proteasome core by binding to the intersubunit pockets.

It is found in the cytoplasm. Its function is as follows. ATPase which is responsible for recognizing, binding, unfolding and translocation of substrate proteins into the archaeal 20S proteasome core particle. Is essential for opening the gate of the 20S proteasome via an interaction with its C-terminus, thereby allowing substrate entry and access to the site of proteolysis. Thus, the C-termini of the proteasomal ATPase function like a 'key in a lock' to induce gate opening and therefore regulate proteolysis. Unfolding activity requires energy from ATP hydrolysis, whereas ATP binding alone promotes ATPase-20S proteasome association which triggers gate opening, and supports translocation of unfolded substrates. The sequence is that of Proteasome-activating nucleotidase from Pyrococcus abyssi (strain GE5 / Orsay).